The following is a 481-amino-acid chain: UDP-N-acetylmuramate--L-alanine ligase (481 aa).

126 to 132 (GTHGKTT) lines the ATP pocket.

It belongs to the MurCDEF family.

Its subcellular location is the cytoplasm. It catalyses the reaction UDP-N-acetyl-alpha-D-muramate + L-alanine + ATP = UDP-N-acetyl-alpha-D-muramoyl-L-alanine + ADP + phosphate + H(+). It participates in cell wall biogenesis; peptidoglycan biosynthesis. Functionally, cell wall formation. The sequence is that of UDP-N-acetylmuramate--L-alanine ligase from Marinobacter nauticus (strain ATCC 700491 / DSM 11845 / VT8) (Marinobacter aquaeolei).